A 141-amino-acid chain; its full sequence is Drosulfakinins (141 aa).

The N-terminal stretch at 1 to 31 is a signal peptide; the sequence is MGLRRCTHFATLVMPLWALALFFLVVMQVPA. A propeptide spanning residues 32 to 73 is cleaved from the precursor; sequence QTTSLQISKEDRRLQELESKMGAESEQPNANLVGPSISRFGD. Residues 49 to 69 form a disordered region; the sequence is ESKMGAESEQPNANLVGPSIS. Phe-82 carries the post-translational modification Phenylalanine amide. The propeptide occupies 86-111; the sequence is VPLISRPMIPIELDLLMDNDDERTKA. Tyr-117 is modified (sulfotyrosine). Phe-122 carries the post-translational modification Phenylalanine amide. Residue Tyr-134 is modified to Sulfotyrosine. Phe-139 carries the post-translational modification Phenylalanine amide.

The protein belongs to the gastrin/cholecystokinin family.

It localises to the secreted. Its function is as follows. Drosulfakinin-0 (DSK 0) plays diverse biological roles including regulating gut muscle contraction in adults but not in larvae. This Drosophila erecta (Fruit fly) protein is Drosulfakinins.